A 462-amino-acid polypeptide reads, in one-letter code: Probable peptidoglycan glycosyltransferase FtsW (462 aa).

Residues 1-28 are disordered; the sequence is MREPRHVPQLRASGRRFPQRGRRHRFGK. Topologically, residues 1 to 92 are cytoplasmic; it reads MREPRHVPQL…RSRMLDFDYS (92 aa). Basic residues predominate over residues 13 to 27; sequence SGRRFPQRGRRHRFG. The chain crosses the membrane as a helical span at residues 93-113; that stretch reads LLWVSIALLGLGVVMVYSASI. The Periplasmic portion of the chain corresponds to 114 to 127; that stretch reads AMPDSPKYASYHDY. The chain crosses the membrane as a helical span at residues 128–148; the sequence is AFLLRHCVSLVVAFVAAVIAF. The Cytoplasmic segment spans residues 149–158; the sequence is RVPVSTWDKY. The helical transmembrane segment at 159 to 179 threads the bilayer; it reads APHLFLIALVGLVIVLIPHIG. Topologically, residues 180 to 192 are periplasmic; that stretch reads KGVNGARRWIPLG. Residues 193–215 form a helical membrane-spanning segment; sequence ITNMQPSEIMKLAVTIYAANYTV. Residues 216-223 lie on the Cytoplasmic side of the membrane; the sequence is RKQEYMQS. The chain crosses the membrane as a helical span at residues 224-244; it reads FAKGFLPMAFAVGLVGALLLL. Residues 245 to 247 lie on the Periplasmic side of the membrane; it reads EPD. The chain crosses the membrane as a helical span at residues 248–268; sequence MGAFMVVAAIAMGVLFLGGVN. Residues 269–270 lie on the Cytoplasmic side of the membrane; sequence GK. Residues 271-291 traverse the membrane as a helical segment; that stretch reads LFGGLVATAVGTFTMLVWLSP. The Periplasmic segment spans residues 292–349; sequence WRRERIFAYLDPWDERYAQGKAYQLTHSLIAFGRGEWFGVGLGGSVEKLNYLPEAHTD. The chain crosses the membrane as a helical span at residues 350–370; the sequence is FILAVIGEELGFVGVLVVILL. The Cytoplasmic segment spans residues 371–398; it reads FYWIVRRSFEIGRQALALDRTFAGLMAK. A helical membrane pass occupies residues 399–419; the sequence is GVGIWFGAQAFINMGVNLGLL. Residues 420–425 lie on the Periplasmic side of the membrane; the sequence is PTKGLT. The helical transmembrane segment at 426 to 446 threads the bilayer; the sequence is LPLVSYGGSGILLNCISLAVL. The Cytoplasmic portion of the chain corresponds to 447 to 462; it reads LRVDYENRVLMRGGKV.

Belongs to the SEDS family. FtsW subfamily.

It is found in the cell inner membrane. The enzyme catalyses [GlcNAc-(1-&gt;4)-Mur2Ac(oyl-L-Ala-gamma-D-Glu-L-Lys-D-Ala-D-Ala)](n)-di-trans,octa-cis-undecaprenyl diphosphate + beta-D-GlcNAc-(1-&gt;4)-Mur2Ac(oyl-L-Ala-gamma-D-Glu-L-Lys-D-Ala-D-Ala)-di-trans,octa-cis-undecaprenyl diphosphate = [GlcNAc-(1-&gt;4)-Mur2Ac(oyl-L-Ala-gamma-D-Glu-L-Lys-D-Ala-D-Ala)](n+1)-di-trans,octa-cis-undecaprenyl diphosphate + di-trans,octa-cis-undecaprenyl diphosphate + H(+). Its pathway is cell wall biogenesis; peptidoglycan biosynthesis. In terms of biological role, peptidoglycan polymerase that is essential for cell division. This Burkholderia thailandensis (strain ATCC 700388 / DSM 13276 / CCUG 48851 / CIP 106301 / E264) protein is Probable peptidoglycan glycosyltransferase FtsW.